The following is a 335-amino-acid chain: Olfactory receptor 52B6 (335 aa).

The Extracellular segment spans residues 1 to 45; that stretch reads MAQVRALHKIMALFSANSIGAMNNSDTRIAGCFLTGIPGLEQLHI. The N-linked (GlcNAc...) asparagine glycan is linked to N23. Residues 46-66 form a helical membrane-spanning segment; sequence WLSIPFCIMYITALEGNGILI. Over 67-74 the chain is Cytoplasmic; sequence CVILSQAI. A helical membrane pass occupies residues 75-95; sequence LHEPMYIFLSMLASADVLLST. At 96–119 the chain is on the extracellular side; that stretch reads TTMPKALANLWLGYSLISFDGCLT. Cysteines 117 and 208 form a disulfide. A helical membrane pass occupies residues 120-139; it reads QMFFIHFLFIHSAVLLAMAF. Topologically, residues 140–158 are cytoplasmic; it reads DRYVAICSPLRYVTILTSK. Residues 159–179 form a helical membrane-spanning segment; the sequence is VIGKIVTAALSHSFIIMFPSI. Residues 180–215 are Extracellular-facing; it reads FLLEHLHYCQINIIAHTFCEHMGIAHLSCSDISINV. A helical membrane pass occupies residues 216–236; sequence WYGLAAALLSTGLDIMLITVS. Residues 237–256 are Cytoplasmic-facing; the sequence is YIHILQAVFRLLSQDARSKA. The helical transmembrane segment at 257-277 threads the bilayer; the sequence is LSTCGSHICVILLFYVPALFS. The Extracellular segment spans residues 278–293; that stretch reads VFAYRFGGRSVPCYVH. Residues 294–314 form a helical membrane-spanning segment; the sequence is ILLASLYVVIPPMLNPVIYGV. At 315-335 the chain is on the cytoplasmic side; the sequence is RTKPILEGAKQMFSNLAKGSK.

The protein belongs to the G-protein coupled receptor 1 family.

The protein resides in the cell membrane. In terms of biological role, odorant receptor. The protein is Olfactory receptor 52B6 (OR52B6) of Homo sapiens (Human).